We begin with the raw amino-acid sequence, 245 residues long: tRNA pseudouridine synthase A (245 aa).

The active-site Nucleophile is the Asp-52. Tyr-111 lines the substrate pocket.

This sequence belongs to the tRNA pseudouridine synthase TruA family. Homodimer.

It carries out the reaction uridine(38/39/40) in tRNA = pseudouridine(38/39/40) in tRNA. In terms of biological role, formation of pseudouridine at positions 38, 39 and 40 in the anticodon stem and loop of transfer RNAs. This chain is tRNA pseudouridine synthase A, found in Rickettsia prowazekii (strain Madrid E).